The following is a 460-amino-acid chain: Bifunctional protein GlmU (460 aa).

A pyrophosphorylase region spans residues 1 to 237; the sequence is MSSNQYTAGA…DPDLLGVNTP (237 aa). UDP-N-acetyl-alpha-D-glucosamine-binding positions include 13–16, lysine 27, glutamine 78, and 83–84; these read LAAG and GT. A Mg(2+)-binding site is contributed by aspartate 109. UDP-N-acetyl-alpha-D-glucosamine is bound by residues glycine 146, glutamate 160, asparagine 177, and asparagine 235. Residue asparagine 235 coordinates Mg(2+). The linker stretch occupies residues 238–258; sequence AELMRSEELLRENIVTRHLHN. Positions 259-460 are N-acetyltransferase; the sequence is GVHVHAAGSV…QKNLRKTRHS (202 aa). UDP-N-acetyl-alpha-D-glucosamine contacts are provided by arginine 341 and lysine 359. The active-site Proton acceptor is the histidine 371. UDP-N-acetyl-alpha-D-glucosamine-binding residues include tyrosine 374 and asparagine 385. Acetyl-CoA-binding positions include alanine 388, 394 to 395, serine 413, alanine 431, and arginine 448; that span reads NY.

It in the N-terminal section; belongs to the N-acetylglucosamine-1-phosphate uridyltransferase family. The protein in the C-terminal section; belongs to the transferase hexapeptide repeat family. As to quaternary structure, homotrimer. Mg(2+) serves as cofactor.

Its subcellular location is the cytoplasm. The catalysed reaction is alpha-D-glucosamine 1-phosphate + acetyl-CoA = N-acetyl-alpha-D-glucosamine 1-phosphate + CoA + H(+). The enzyme catalyses N-acetyl-alpha-D-glucosamine 1-phosphate + UTP + H(+) = UDP-N-acetyl-alpha-D-glucosamine + diphosphate. It functions in the pathway nucleotide-sugar biosynthesis; UDP-N-acetyl-alpha-D-glucosamine biosynthesis; N-acetyl-alpha-D-glucosamine 1-phosphate from alpha-D-glucosamine 6-phosphate (route II): step 2/2. The protein operates within nucleotide-sugar biosynthesis; UDP-N-acetyl-alpha-D-glucosamine biosynthesis; UDP-N-acetyl-alpha-D-glucosamine from N-acetyl-alpha-D-glucosamine 1-phosphate: step 1/1. It participates in bacterial outer membrane biogenesis; LPS lipid A biosynthesis. In terms of biological role, catalyzes the last two sequential reactions in the de novo biosynthetic pathway for UDP-N-acetylglucosamine (UDP-GlcNAc). The C-terminal domain catalyzes the transfer of acetyl group from acetyl coenzyme A to glucosamine-1-phosphate (GlcN-1-P) to produce N-acetylglucosamine-1-phosphate (GlcNAc-1-P), which is converted into UDP-GlcNAc by the transfer of uridine 5-monophosphate (from uridine 5-triphosphate), a reaction catalyzed by the N-terminal domain. This chain is Bifunctional protein GlmU, found in Oleidesulfovibrio alaskensis (strain ATCC BAA-1058 / DSM 17464 / G20) (Desulfovibrio alaskensis).